The following is a 620-amino-acid chain: Eukaryotic translation initiation factor 2-alpha kinase 1 (620 aa).

Positions 1-38 are disordered; the sequence is MLGGGSVDGERDTDDDAAGAVAAPPAIDFPAEVSDPKY. Low complexity predominate over residues 18-28; the sequence is AGAVAAPPAID. Residues 85–104 carry the SIFI-degron motif; sequence LHSKQVFKLLCQTFIKMGLL. The Protein kinase domain occupies 167–581; it reads FEELAILGKG…ALQLLQSELF (415 aa). ATP-binding positions include 173–181 and Lys196; that span reads LGKGGYGRV. Thr283 bears the Phosphothreonine mark. One copy of the HRM 1 repeat lies at 408-413; that stretch reads ACPYVM. The Proton acceptor role is filled by Asp440. Residues Thr484 and Thr486 each carry the phosphothreonine; by autocatalysis modification. Thr491 is modified (phosphothreonine). Residues 550-555 form an HRM 2 repeat; the sequence is RCPVQA.

This sequence belongs to the protein kinase superfamily. Ser/Thr protein kinase family. GCN2 subfamily. Synthesized in an inactive form that binds to the N-terminal domain of CDC37. Has to be associated with a multiprotein complex containing Hsp90, CDC37 and PPP5C for maturation and activation by autophosphorylation. The phosphatase PPP5C modulates this activation. Homodimer; homodimerizes in presence of heme, forming a disulfide-linked inactive homodimer. Interacts with DELE1; binds both to full-length DELE1 and processed form of DELE1 (S-DELE1) in response to stress, leading to activate its protein kinase activity and trigger the integrated stress response (ISR). In terms of processing, activated by autophosphorylation; phosphorylated predominantly on serine and threonine residues, but also on tyrosine residues. Autophosphorylation at Thr-486 is required for kinase activation. The active autophosphorylated form apparently is largely refractory to cellular heme fluctuations. Ubiquitinated and degraded by the SIFI complex once the mitochondrial stress has been resolved, thereby providing stress response silencing. Within the SIFI complex, UBR4 initiates ubiquitin chain that are further elongated or branched by KCMF1.

Its subcellular location is the cytoplasm. The enzyme catalyses L-seryl-[protein] + ATP = O-phospho-L-seryl-[protein] + ADP + H(+). The catalysed reaction is L-threonyl-[protein] + ATP = O-phospho-L-threonyl-[protein] + ADP + H(+). Its activity is regulated as follows. In normal conditions, the protein kinase activity is inhibited; inhibition is relieved by various stress conditions. Inhibited by heme: in presence of heme, forms a disulfide-linked inactive homodimer. Heme depletion relieves inhibition and stimulates kinase activity by autophosphorylation. Inhibited by the heme metabolites biliverdin and bilirubin. Induced by oxidative stress generated by arsenite treatment. Binding of nitric oxide (NO) to the heme iron in the N-terminal heme-binding domain activates the kinase activity, while binding of carbon monoxide (CO) suppresses kinase activity. Protein kinase activity is also activated upon binding to DELE1 in response to various stress, triggering the integrated stress response (ISR): activated by full-length DELE1 in response to iron deficiency, while it is activated by the processed form of DELE1 (S-DELE1) in response to mitochondrial stress. Functionally, metabolic-stress sensing protein kinase that phosphorylates the alpha subunit of eukaryotic translation initiation factor 2 (EIF2S1/eIF-2-alpha) in response to various stress conditions. Key activator of the integrated stress response (ISR) required for adaptation to various stress, such as heme deficiency, oxidative stress, osmotic shock, mitochondrial dysfunction and heat shock. EIF2S1/eIF-2-alpha phosphorylation in response to stress converts EIF2S1/eIF-2-alpha in a global protein synthesis inhibitor, leading to a global attenuation of cap-dependent translation, while concomitantly initiating the preferential translation of ISR-specific mRNAs, such as the transcriptional activator ATF4, and hence allowing ATF4-mediated reprogramming. Acts as a key sensor of heme-deficiency: in normal conditions, binds hemin via a cysteine thiolate and histidine nitrogenous coordination, leading to inhibit the protein kinase activity. This binding occurs with moderate affinity, allowing it to sense the heme concentration within the cell: heme depletion relieves inhibition and stimulates kinase activity, activating the ISR. Thanks to this unique heme-sensing capacity, plays a crucial role to shut off protein synthesis during acute heme-deficient conditions. In red blood cells (RBCs), controls hemoglobin synthesis ensuring a coordinated regulation of the synthesis of its heme and globin moieties. It thereby plays an essential protective role for RBC survival in anemias of iron deficiency. Iron deficiency also triggers activation by full-length DELE1. Also activates the ISR in response to mitochondrial dysfunction: HRI/EIF2AK1 protein kinase activity is activated upon binding to the processed form of DELE1 (S-DELE1), thereby promoting the ATF4-mediated reprogramming. Also acts as an activator of mitophagy in response to mitochondrial damage: catalyzes phosphorylation of eIF-2-alpha (EIF2S1) following activation by S-DELE1, thereby promoting mitochondrial localization of EIF2S1, triggering PRKN-independent mitophagy. This Rattus norvegicus (Rat) protein is Eukaryotic translation initiation factor 2-alpha kinase 1.